Consider the following 213-residue polypeptide: MDAEFWHSRWAENRIGFHLDDTNPVLTQYWPMVKATRDDRVLVPMCGKSVDLVWLAQKHNNVIGIELSDIAVRSFFAEHLYTPMVTSIGHESVYAFDEITIHCGDYFSVRIDPVDVVYDRAALIAMPKNMREMYVERLLSLVKKGGRILLVTLDYPQEQLNGPPFSVMSDEVRRLFDGCNITLLARDEKDETHPRRKNGLSHFAEETWLIEVA.

Residues Trp-10, Met-45, Glu-66, and Arg-120 each coordinate S-adenosyl-L-methionine.

Belongs to the class I-like SAM-binding methyltransferase superfamily. TPMT family.

It localises to the cytoplasm. The catalysed reaction is S-adenosyl-L-methionine + a thiopurine = S-adenosyl-L-homocysteine + a thiopurine S-methylether.. The polypeptide is Thiopurine S-methyltransferase (Photobacterium profundum (strain SS9)).